Reading from the N-terminus, the 492-residue chain is Probable glycogen synthase 2 (492 aa).

Residue Lys15 participates in ADP-alpha-D-glucose binding.

This sequence belongs to the glycosyltransferase 1 family. Bacterial/plant glycogen synthase subfamily.

The catalysed reaction is [(1-&gt;4)-alpha-D-glucosyl](n) + ADP-alpha-D-glucose = [(1-&gt;4)-alpha-D-glucosyl](n+1) + ADP + H(+). It functions in the pathway glycan biosynthesis; glycogen biosynthesis. Functionally, synthesizes alpha-1,4-glucan chains using ADP-glucose. The sequence is that of Probable glycogen synthase 2 (glgA2) from Nostoc sp. (strain PCC 7120 / SAG 25.82 / UTEX 2576).